The following is a 402-amino-acid chain: MSDRHLYGSDHSYLSSKPSCSSCRRQSSTSQKNECMTNPGSIVLTQRWTVCNFESLLKLSRPGSCLRSTVFKDDAVPDACWQLCLYPGGKREENANNVSLFLKMSATSPSKEVVLKAEYRFYFLDDNDEPKFSNVNVGEFHAKPPKGGHSWGLRNIPTQKVQNSIRQDKSLVISCHIELIPDASKVPCKRVPITPSIEMPFAQIPRAHVESELEMLASGDGTDMTIVAGPLDGEREQFRVHAYKLRAHSDVFQMMLSHTEMRENQEKRIEILDFSPTSVRAMVEFIYAGVIKSDIDVYQAVDVMQIAEKYQILALKMTCEQHLLDRLNVNNVLECITHAERYNTDVLYDACVDFAIHNRQHVMALTSWRNFISDEPVLASNLLEKMVKSNDNSSPPVKKPRV.

Residues 1 to 25 (MSDRHLYGSDHSYLSSKPSCSSCRR) form a disordered region. The span at 15 to 25 (SSKPSCSSCRR) shows a compositional bias: low complexity. The MATH domain maps to 43 to 177 (VLTQRWTVCN…DKSLVISCHI (135 aa)). A BTB domain is found at 222 to 295 (TDMTIVAGPL…IYAGVIKSDI (74 aa)).

In terms of assembly, interacts with cul-3.

Its pathway is protein modification; protein ubiquitination. Functionally, probable substrate-specific adapter of an E3 ubiquitin-protein ligase complex which mediates the ubiquitination and subsequent proteasomal degradation of target proteins. This Caenorhabditis elegans protein is BTB and MATH domain-containing protein 40 (bath-40).